Reading from the N-terminus, the 98-residue chain is Large ribosomal subunit protein uL23 (98 aa).

Belongs to the universal ribosomal protein uL23 family. As to quaternary structure, part of the 50S ribosomal subunit. Contacts protein L29, and trigger factor when it is bound to the ribosome.

One of the early assembly proteins it binds 23S rRNA. One of the proteins that surrounds the polypeptide exit tunnel on the outside of the ribosome. Forms the main docking site for trigger factor binding to the ribosome. The chain is Large ribosomal subunit protein uL23 from Hydrogenovibrio crunogenus (strain DSM 25203 / XCL-2) (Thiomicrospira crunogena).